Consider the following 727-residue polypeptide: Elongation factor 2 (727 aa).

Residues 19–260 (DQIRNIGICA…MVVTHLPNPV (242 aa)) enclose the tr-type G domain. GTP is bound by residues 28-35 (AHIDHGKT), 94-98 (DTPGH), and 148-151 (NKVD). Position 603 is a diphthamide (histidine 603).

This sequence belongs to the TRAFAC class translation factor GTPase superfamily. Classic translation factor GTPase family. EF-G/EF-2 subfamily.

The protein resides in the cytoplasm. Catalyzes the GTP-dependent ribosomal translocation step during translation elongation. During this step, the ribosome changes from the pre-translocational (PRE) to the post-translocational (POST) state as the newly formed A-site-bound peptidyl-tRNA and P-site-bound deacylated tRNA move to the P and E sites, respectively. Catalyzes the coordinated movement of the two tRNA molecules, the mRNA and conformational changes in the ribosome. The polypeptide is Elongation factor 2 (Methanococcus aeolicus (strain ATCC BAA-1280 / DSM 17508 / OCM 812 / Nankai-3)).